We begin with the raw amino-acid sequence, 3092 residues long: MNQSDPQDKKNFPMEYSLTKHLFFDRLLLVLPIESNLKTYADVEADSVFNSCRSIILNIAITKDLNPIIENTLGLIDLIVQDEEITSDNITDDIAHSILVLLRLLSDVFEYYWDQNNDFKKIRNDNYKPGFSSHRPNFHTSRPKHTRINPALATMLLCKISKLKFNTRTLKVLQNMSHHLSGSATISKSSILPDSQEFLQKRNYPAYTEKIDLTIDYIQRFISASNHVEFTKCVKTKVVAPLLISHTSTELGVVNHLDLFGCEYLTDKNLLAYLDILQHLSSYMKRTIFHSLLLYYASKAFLFWIMARPKEYVKIYNNLISSDYNSPSSSSDNGGSNNSDKTSISQLVSLLFDDVYSTFSVSSLLTNVNNDHHYHLHHSSSSSKTTNTNSPNSISKTSIKQSSVNASGNVSPSQFSTGNDASPTSPMASLSSPLNTNILGYPLSPITSTLGQANTSTSTTAATTKTDADTPSTMNTNNNNNNNNSANLNNIPQRIFSLDDISSFNSSRKSLNLDDSNSLFLWDTSQHSNASMTNTNMHAGVNNSQSQNDQSSLNYMENIMELYSNYTGSELSSHTAILRFLVVLTLLDSEVYDEMNSNSYRKISEPIMNINPKDSNTSSWGSASKNPSIRHLTHGLKKLTLQQGRKRNVKFLTYLIRNLNGGQFVSDVSLIDSIRSILFLMTMTSSISQIDSNIASVIFSKRFYNLLGQNLEVGTNWNSATANTFISHCVERNPLTHRRLQLEFFASGLQLDSDLFLRHLQLEKELNHIDLPKISLYTEGFRVFFHLVSTKKLHEDIAEKTSSVLKRLFCIIADILLKATPYFDDNVTKIIASILDGHILDQFDAARTLSNDDHVSFDAATSVYTEPTEIIHNSSDASLVSSLSQSPLSINSGSNITNTRTWDIQSILPTLSNRSSASDLSLSNILTNPLEAQQNNNANLLAHRLSGVPTTKRYASPNDSERSRQSPYSSPPQLQQSDLPSPLSVLSSSAGFSSNHSITATPTILKNIKSPKPNKTKKIADDKQLKQPSYSRVILSDNDEARKIMMNIFSIFKRMTNWFIRPDANTEFPKTFTDIIKPLFVSILDSNQRLQVTARAFIEIPLSYIATFEDIDNDLDPRVLNDHYLLCTYAVTLFASSLFDLKLENAKREMLLDIIVKFQRVRSYLSNLAEKHNLVQAIITTERLTLPLLVGAVGSGIFISLYCSRGNTPRLIKISCCEFLRSLRFYQKYVGALDQYSIYNIDFIDAMAQDNFTASGSVALQRRLRNNILTYIKGSDSILLDSMDVIYKKWFYFSCSKSVTQEELVDFRSLAGILASMSGILSDMQELEKSKSAPDNEGDSLSFESRNPAYEVHKSLKLELTKKMNFFISKQCQWLNNPNLLTRENSRDILSIELHPLSFNLLFNNLGLKIDELMSIDLSKSHEDSSFVLLEQIIIIIRTILKRDDDEKIMLLFSTDLLDAVDKLIEIVEKISIKSSKYYKGIIQMSKMFRAFEHSEKNLGISNHFHLKNKWLKLVIGWFKLSINKDYDFENLSRPLREMDLQKRDEDFLYIDTSIESAKALAYLTHNVPLEIPPSSSKEDWNRSSTVSFGNHFTILLKGLEKSADLNQFPVSLRHKISILNENVIIALTNLSNANVNVSLKFTLPMGYSPNKDIRIAFLRVFIDIVTNYPVNPEKHEMDKMLAIDDFLKYIIKNPILAFFGSLACSPADVDLYAGGFLNAFDTRNASHILVTELLKQEIKRAARSDDILRRNSCATRALSLYTRSRGNKYLIKTLRPVLQGIVDNKESFEIDKMKPGSENSEKMLDLFEKYMTRLIDAITSSIDDFPIELVDICKTIYNAASVNFPEYAYIAVGSFVFLRFIGPALVSPDSENIIIVTHAHDRKPFITLAKVIQSLANGRENIFKKDILVSKEEFLKTCSDKIFNFLSELCKIPTNNFTVNVREDPTPISFDYSFLHKFFYLNEFTIRKEIINESKLPGEFSFLKNTVMLNDKILGVLGQPSMEIKNEIPPFVVENREKYPSLYEFMSRYAFKKVDMKEEEEDNAPFVHEAMTLDGIQIIVVTFTNCEYNNFVMDSLVYKVLQIYARMWCSKHYVVIDCTTFYGGKANFQKLTTLFFSLIPEQASSNCMGCYYFNVNKSFMDQWASSYTVENPYLVTTIPRCFINSNTDQSLIKSLGLSGRSLEVLKDVRVTLHDITLYDKEKKKFCPVSLKIGNKYFQVLHEIPQLYKVTVSNRTFSIKFNNVYKISNLISVDVSNTTGVSSEFTLSLDNEEKLVFCSPKYLEIVKMFYYAQLKMEEDFGTDFSNDISFSTSSSAVNASYCNVKEVGEIISHLSLVILVGLFNEDDLVKNISYNLLVATQEAFNLDFGTRLHKSPETYVPDDTTTFLALIFKAFSESSTELTPYIWKYMLDGLENDVIPQEHIPTVVCSLSYWVPNLYEHVYLANDEEGPEAISRIIYSLIRLTVKEPNFTTAYLQQIWFLLALDGRLTNVIVEEIVSHALDRDSENRDWMKAVSILTSFPTTEIACQVIEKLINMIKSFLPSLAVEASAHSWSELTILSKISVSIFFESPLLSQMYLPEILFAVSLLIDVGPSEIRVSLYELLMNVCHSLTNNESLPERNRKNLDIVCATFARQKLNFISGFSQEKGRVLPNFAASSFSSKFGTLDLFTKNIMLLMEYGSISEGAQWEAKYKKYLMDAIFGHRSFFSARAMMILGIMSKSHTSLFLCKELLVETMKVFAEPVVDDEQMFIIIAHVFTYSKIVEGLDPSSELMKELFWLATICVESPHPLLFEGGLLFMVNCLKRLYTVHLQLGFDGKSLAKKLMESRNFAATLLAKLESYNGCIWNEDNFPHIILGFIANGLSIPVVKGAALDCLQALFKNTYYERKSNPKSSDYLCYLFLLHLVLSPEQLSTLLLEVGFEDELVPLNNTLKVPLTLINWLSSDSDKSNIVLYQGALLFSCVMSDEPCKFRFALLMRYLLKVNPICVFRFYTLTRKEFRRLSTLEQSSEAVAVSFELIGMLVTHSEFNYLEEFNDEMVELLKKRGLSVVKPLDIFDQEHIEKLKGEGEHQVAIYERKRLATMILARMSCS.

2 disordered regions span residues 375-430 (HLHH…MASL) and 450-487 (LGQANTSTSTTAATTKTDADTPSTMNTNNNNNNNNSAN). Positions 379–400 (SSSSSKTTNTNSPNSISKTSIK) are enriched in low complexity. The segment covering 401–430 (QSSVNASGNVSPSQFSTGNDASPTSPMASL) has biased composition (polar residues). Low complexity predominate over residues 455–487 (TSTSTTAATTKTDADTPSTMNTNNNNNNNNSAN). A phosphoserine mark is found at Ser-497 and Ser-915. Disordered stretches follow at residues 946–988 (SGVP…VLSS) and 1003–1023 (TILKNIKSPKPNKTKKIADDK). Over residues 965-988 (QSPYSSPPQLQQSDLPSPLSVLSS) the composition is skewed to low complexity. Ser-1342 carries the phosphoserine modification. A Ras-GAP domain is found at 1725-1930 (NASHILVTEL…DKIFNFLSEL (206 aa)). A phosphoserine; by PKA mark is found at Ser-1753 and Ser-3004.

The protein localises to the cytoplasm. Functionally, inhibitory regulator of the Ras-cyclic AMP pathway in S.cerevisiae. Stimulates the GTPase activity of Ras proteins. The protein is Inhibitory regulator protein IRA1 (IRA1) of Saccharomyces cerevisiae (strain ATCC 204508 / S288c) (Baker's yeast).